A 204-amino-acid chain; its full sequence is Imidazoleglycerol-phosphate dehydratase (204 aa).

The protein belongs to the imidazoleglycerol-phosphate dehydratase family.

Its subcellular location is the cytoplasm. The catalysed reaction is D-erythro-1-(imidazol-4-yl)glycerol 3-phosphate = 3-(imidazol-4-yl)-2-oxopropyl phosphate + H2O. It participates in amino-acid biosynthesis; L-histidine biosynthesis; L-histidine from 5-phospho-alpha-D-ribose 1-diphosphate: step 6/9. In Corynebacterium urealyticum (strain ATCC 43042 / DSM 7109), this protein is Imidazoleglycerol-phosphate dehydratase.